A 626-amino-acid polypeptide reads, in one-letter code: Mitogen-activated protein kinase kinase kinase 3 (626 aa).

Residues 44-123 (DVRIKFEHNG…KSLRILLLSQ (80 aa)) form the PB1 domain. Disordered regions lie at residues 125-184 (RNHT…YVPE) and 218-273 (SSAE…VKGG). 4 stretches are compositionally biased toward polar residues: residues 128–137 (TSSSPHSGVS), 144–155 (PSQSAGDINTIY), 165–174 (LSVSSQNPGR), and 219–247 (SAENSLSGSCQSLDRSADSPSFRKSQMSR). Phosphoserine is present on residues Ser-147 and Ser-166. A phosphoserine mark is found at Ser-250 and Ser-312. Positions 250-270 (SFPDNRKECSDRETQLYDKGV) are enriched in basic and acidic residues. Residue Ser-337 is modified to Phosphoserine; by SGK1. The residue at position 340 (Ser-340) is a Phosphoserine. One can recognise a Protein kinase domain in the interval 362 to 622 (WRRGKLLGQG…AEELLTHHFA (261 aa)). Residues 368-376 (LGQGAFGRV) and Lys-391 each bind ATP. Catalysis depends on Asp-489, which acts as the Proton acceptor.

It belongs to the protein kinase superfamily. STE Ser/Thr protein kinase family. MAP kinase kinase kinase subfamily. In terms of assembly, binds both upstream activators and downstream substrates in multimolecular complexes. Part of a complex with MAP2K3, RAC1 and CCM2. Interacts with MAP2K5 and SPAG9. It depends on Mg(2+) as a cofactor. In terms of processing, phosphorylation at Ser-166 and Ser-337 by SGK1 inhibits its activity.

It carries out the reaction L-seryl-[protein] + ATP = O-phospho-L-seryl-[protein] + ADP + H(+). The enzyme catalyses L-threonyl-[protein] + ATP = O-phospho-L-threonyl-[protein] + ADP + H(+). Its activity is regulated as follows. Activated by phosphorylation on Thr-530. Its function is as follows. Component of a protein kinase signal transduction cascade. Mediates activation of the NF-kappa-B, AP1 and DDIT3 transcriptional regulators. The chain is Mitogen-activated protein kinase kinase kinase 3 (Map3k3) from Mus musculus (Mouse).